Here is a 113-residue protein sequence, read N- to C-terminus: Histidine triad nucleotide-binding protein (113 aa).

Zn(2+) is bound by residues Cys5 and Cys8. Residues 6-113 (IFCKIAQKQI…GGKKLAWDKL (108 aa)) enclose the HIT domain. An AMP-binding site is contributed by Asp31. His47 serves as a coordination point for Zn(2+). AMP contacts are provided by Asn86, Gly92, and Thr94. Position 97 (His97) interacts with Zn(2+). A Histidine triad motif motif is present at residues 97–101 (HIHFH). Positions 99 and 101 each coordinate AMP. His99 acts as the Tele-AMP-histidine intermediate in catalysis.

This sequence belongs to the HINT family.

The protein localises to the nucleus. It is found in the cytoplasm. It carries out the reaction adenosine 5'-phosphoramidate + H2O = AMP + NH4(+). In terms of biological role, hydrolyzes purine nucleotide phosphoramidates with a single phosphate group, including adenosine 5'monophosphoramidate (AMP-NH2), adenosine 5'monophosphomorpholidate (AMP-morpholidate) and guanosine 5'monophosphomorpholidate (GMP-morpholidate). Hydrolyzes lysyl-AMP (AMP-N-epsilon-(N-alpha-acetyl lysine methyl ester)) generated by lysine tRNA ligase, as well as Met-AMP, His-AMP and Asp-AMP, lysyl-GMP (GMP-N-epsilon-(N-alpha-acetyl lysine methyl ester)) and AMP-N-alanine methyl ester. May also function as scaffolding protein that mediates protein-protein interactions. The chain is Histidine triad nucleotide-binding protein from Entamoeba histolytica (strain ATCC 30459 / HM-1:IMSS / ABRM).